A 170-amino-acid chain; its full sequence is Cytochrome b6-f complex subunit 4 (170 aa).

Transmembrane regions (helical) follow at residues 46 to 66, 105 to 125, and 141 to 161; these read LLFM…GLSV, LLGI…PFIE, and TVFL…TLPL.

The protein belongs to the cytochrome b family. PetD subfamily. The 4 large subunits of the cytochrome b6-f complex are cytochrome b6, subunit IV (17 kDa polypeptide, PetD), cytochrome f and the Rieske protein, while the 4 small subunits are PetG, PetL, PetM and PetN. The complex functions as a dimer.

The protein resides in the cellular thylakoid membrane. Functionally, component of the cytochrome b6-f complex, which mediates electron transfer between photosystem II (PSII) and photosystem I (PSI), cyclic electron flow around PSI, and state transitions. The sequence is that of Cytochrome b6-f complex subunit 4 from Synechococcus sp. (strain JA-2-3B'a(2-13)) (Cyanobacteria bacterium Yellowstone B-Prime).